Here is a 406-residue protein sequence, read N- to C-terminus: Putative competence-damage inducible protein (406 aa).

The protein belongs to the CinA family.

In Natranaerobius thermophilus (strain ATCC BAA-1301 / DSM 18059 / JW/NM-WN-LF), this protein is Putative competence-damage inducible protein.